The sequence spans 570 residues: Keratin, type I cytoskeletal 10 (570 aa).

The segment covering 1–16 (MSVLYSSSSKQFSSSR) has biased composition (low complexity). The segment at 1 to 29 (MSVLYSSSSKQFSSSRSGGGGGGGSVRVS) is disordered. The tract at residues 1–143 (MSVLYSSSSK…GDGGSLLSGN (143 aa)) is head. Phosphoserine occurs at positions 15 and 17. At R32 the chain carries Asymmetric dimethylarginine; alternate. The residue at position 32 (R32) is an Omega-N-methylarginine; alternate. 4 positions are modified to phosphoserine: S34, S45, S48, and S168. The segment at 144-179 (GRVTMQNLNDRLASYMDKVRALEESNYELEGKIKEW) is coil 1A. The 315-residue stretch at 144–458 (GRVTMQNLND…SLLEGEGSSS (315 aa)) folds into the IF rod domain. A linker 1 region spans residues 180–200 (YEKHGNSSQREPRDYSKYYKT). A coil 1B region spans residues 201-292 (IEDLKGQILT…KNHEEEMRDL (92 aa)). The tract at residues 293-315 (QNVSTGDVNVEMNAAPGVDLTQL) is linker 12. Residues 316 to 454 (LNNMRNQYEQ…QTYRSLLEGE (139 aa)) are coil 2. The interval 451 to 570 (LEGEGSSSGG…GDQSSKGPRY (120 aa)) is disordered. The tail stretch occupies residues 455 to 570 (GSSSGGGGGR…GDQSSKGPRY (116 aa)). Residues 456–562 (SSSGGGGGRR…GGFKSSGGGD (107 aa)) show a composition bias toward gly residues.

The protein belongs to the intermediate filament family. In terms of assembly, (Microbial infection) Interacts (via C-terminal tail domain) with the S.aureus clumping factor, clfB; this interaction probably mediates S.aureus attachment to the highly keratinized squamous epithelial cells from the nasal cavity. Heterotetramer of two type I and two type II keratins. Heterodimer with KRT1. Two heterodimers of KRT1 and KRT10 form a heterotetramer. The KRT10 subunit in the heterotetramer is probably disulfide-linked. Interacts with PLEC isoform 1C, when in a heterodimer with KRT1. As to quaternary structure, (Microbial infection) Interacts (via the C-terminal tail domain) with S.pneumoniae serine-rich repeat protein PsrP; this interaction probably mediates S.pneumoniae adherence to lung tissue and subsequent pathogenesis. In terms of tissue distribution, expressed in the suprabasal layers of the epidermis throughout the entire sole (at protein level). Expressed in the infundibular regions of the ear, the interscale regions of the tail, and the interfollicular epidermis of the back. Expressed in lung tissue from young mice (at protein level).

The protein localises to the secreted. It localises to the extracellular space. It is found in the cell surface. Its subcellular location is the cytoplasm. Plays a role in the establishment of the epidermal barrier on plantar skin. Involved in the maintenance of cell layer development and keratin filament bundles in suprabasal cells of the epithelium. Its function is as follows. (Microbial infection) Acts as a mediator of S.aureus adherence to desquamated nasal epithelial cells via clfB, and hence may play a role in nasal colonization. In terms of biological role, (Microbial infection) Binds S.pneumoniae PsrP, mediating adherence of the bacteria to lung cell lines. In Mus musculus (Mouse), this protein is Keratin, type I cytoskeletal 10 (Krt10).